A 479-amino-acid polypeptide reads, in one-letter code: Membrane-bound lytic murein transglycosylase F (479 aa).

Residues 1-18 (MKGLFIRIVLAICLSLWA) form the signal peptide. The interval 19–266 (IDMVFPWQQI…RIEEKYFNHL (248 aa)) is non-LT domain. The tract at residues 267–479 (NQFDYVDTRS…ISTQTQQEQR (213 aa)) is LT domain. Residue E311 is part of the active site.

It in the N-terminal section; belongs to the bacterial solute-binding protein 3 family. The protein in the C-terminal section; belongs to the transglycosylase Slt family.

The protein resides in the cell outer membrane. The catalysed reaction is Exolytic cleavage of the (1-&gt;4)-beta-glycosidic linkage between N-acetylmuramic acid (MurNAc) and N-acetylglucosamine (GlcNAc) residues in peptidoglycan, from either the reducing or the non-reducing ends of the peptidoglycan chains, with concomitant formation of a 1,6-anhydrobond in the MurNAc residue.. Its function is as follows. Murein-degrading enzyme that degrades murein glycan strands and insoluble, high-molecular weight murein sacculi, with the concomitant formation of a 1,6-anhydromuramoyl product. Lytic transglycosylases (LTs) play an integral role in the metabolism of the peptidoglycan (PG) sacculus. Their lytic action creates space within the PG sacculus to allow for its expansion as well as for the insertion of various structures such as secretion systems and flagella. The sequence is that of Membrane-bound lytic murein transglycosylase F from Histophilus somni (strain 2336) (Haemophilus somnus).